Here is a 1137-residue protein sequence, read N- to C-terminus: 2'-5'-oligoadenylate synthase 3 (1137 aa).

N-acetylmethionine is present on M1. The OAS domain 1 stretch occupies residues 6 to 341; the sequence is TPAGALDKLV…GALVQPWEGP (336 aa). 2 interaction with dsRNA regions span residues 12–56 and 185–199; these read DKLV…VIRI and ELRKNFVNIRPVKLK. The tract at residues 342-461 is linker; that stretch reads GLPCAGILDL…GSQMGPDLSQ (120 aa). The span at 434-453 shows a compositional bias: polar residues; that stretch reads QSTASSNTPPGHSSMSTAGS. The disordered stretch occupies residues 434–462; the sequence is QSTASSNTPPGHSSMSTAGSQMGPDLSQI. OAS domain stretches follow at residues 462–792 and 800–1134; these read IPSK…PWDV and TPAQ…WPVK. An ATP-binding site is contributed by S854. Mg(2+) is bound by residues D866, D868, and D938. ATP-binding residues include R997, K1000, and Q1019.

Belongs to the 2-5A synthase family. Monomer. The cofactor is Mg(2+).

The protein resides in the cytoplasm. The protein localises to the nucleus. It carries out the reaction 3 ATP = 5'-triphosphoadenylyl-(2'-&gt;5')-adenylyl-(2'-&gt;5')-adenosine + 2 diphosphate. Its activity is regulated as follows. Produced as a latent enzyme which is activated by dsRNA generated during the course of viral infection. Strongly activated by long dsRNAs at least 50 nucleotides in length. ssRNA does not activate the enzyme. Interferon-induced, dsRNA-activated antiviral enzyme which plays a critical role in cellular innate antiviral response. In addition, it may also play a role in other cellular processes such as apoptosis, cell growth, differentiation and gene regulation. Synthesizes preferentially dimers of 2'-5'-oligoadenylates (2-5A) from ATP which then bind to the inactive monomeric form of ribonuclease L (RNase L) leading to its dimerization and subsequent activation. Activation of RNase L leads to degradation of cellular as well as viral RNA, resulting in the inhibition of protein synthesis, thus terminating viral replication. Can mediate the antiviral effect via the classical RNase L-dependent pathway or an alternative antiviral pathway independent of RNase L. The chain is 2'-5'-oligoadenylate synthase 3 (Oas3) from Rattus norvegicus (Rat).